Here is a 379-residue protein sequence, read N- to C-terminus: Homoserine O-acetyltransferase (379 aa).

One can recognise an AB hydrolase-1 domain in the interval 52–356 (NVVMVLHALT…IRGHDGFLVE (305 aa)). S157 functions as the Nucleophile in the catalytic mechanism. Residue R227 coordinates substrate. Catalysis depends on residues D320 and H350. D351 contacts substrate.

Belongs to the AB hydrolase superfamily. MetX family. In terms of assembly, homodimer.

Its subcellular location is the cytoplasm. It carries out the reaction L-homoserine + acetyl-CoA = O-acetyl-L-homoserine + CoA. It participates in amino-acid biosynthesis; L-methionine biosynthesis via de novo pathway; O-acetyl-L-homoserine from L-homoserine: step 1/1. In terms of biological role, transfers an acetyl group from acetyl-CoA to L-homoserine, forming acetyl-L-homoserine. The sequence is that of Homoserine O-acetyltransferase from Mycobacterium marinum (strain ATCC BAA-535 / M).